Reading from the N-terminus, the 634-residue chain is Sodium-dependent neutral amino acid transporter B(0)AT1 (634 aa).

Residues 1–41 are Cytoplasmic-facing; the sequence is MVRLVLPNPGLEDRIPSLDELEVIEKEEASSRPKWDNKAQY. A Phosphoserine modification is found at Ser-17. Residues 42–62 form a helical membrane-spanning segment; sequence MLTCVGFCVGLGNVWRFPYLC. Residues 63–65 lie on the Extracellular side of the membrane; that stretch reads QSH. Residues 66 to 86 traverse the membrane as a helical segment; the sequence is GGGAFMIPFLILLVLEGIPLL. Residues 87 to 119 are Cytoplasmic-facing; it reads HLEFAIGQRLRKGSVGVWSSIHPALKGVGIASM. Residues 120–140 traverse the membrane as a helical segment; that stretch reads FVSFMVGLYYNTIIAWVMWYF. Residues 141 to 192 are Extracellular-facing; the sequence is FNSFQEPLPWSECPLNQNQTGYVEECAKSSSVDYFWYRETLNISTSISDSGS. Residues Asn-158 and Asn-182 are each glycosylated (N-linked (GlcNAc...) asparagine). A helical membrane pass occupies residues 193 to 213; sequence IQWWILLCLTCAWSVLYVCTI. The Cytoplasmic segment spans residues 214 to 221; it reads RGIETTGK. Residues 222–242 traverse the membrane as a helical segment; the sequence is AVYITSTLPYVVLTIFLIRGL. The Extracellular segment spans residues 243-268; that stretch reads TLKGATNGIVFLFTPNITELSNPNTW. Asn-258 carries N-linked (GlcNAc...) asparagine glycosylation. Residues 269-289 traverse the membrane as a helical segment; that stretch reads LDAGAQVFYSFSLAFGGLISF. Residues 290-304 are Cytoplasmic-facing; the sequence is SSYNSVHNNCEMDSV. Residues 305 to 325 traverse the membrane as a helical segment; that stretch reads IVSIINGFTSVYAATVVYSII. Residues 326–413 are Extracellular-facing; the sequence is GFRATERFDD…TEAITKMPVS (88 aa). N-linked (GlcNAc...) asparagine glycans are attached at residues Asn-354 and Asn-368. A helical membrane pass occupies residues 414–434; that stretch reads PLWSVLFFIMLFCLGLSSMFG. Residues 435 to 456 lie on the Cytoplasmic side of the membrane; that stretch reads NMEGVVVPLQDLNITPKKWPKE. Residues 457–477 traverse the membrane as a helical segment; that stretch reads LLTGLICLGTYLIAFIFTLNS. Residues 478-490 lie on the Extracellular side of the membrane; the sequence is GQYWLSLLDSYAG. Residues 491 to 511 form a helical membrane-spanning segment; sequence SIPLLIIAFCEMFAVVYVYGV. At 512–531 the chain is on the cytoplasmic side; the sequence is DRFNKDIEFMIGHKPNIFWQ. A helical transmembrane segment spans residues 532-552; the sequence is VTWRVVSPLIMLVIFLFFFVI. Residues 553–581 lie on the Extracellular side of the membrane; sequence EVNKQLMYSVWDPDYEEFPKSQKVPYPDW. The helical transmembrane segment at 582–602 threads the bilayer; the sequence is VYAVVVIVAGVPCLTIPCFAI. The Cytoplasmic segment spans residues 603-634; sequence YKLIRNYCQKSGDQHGLVNALSTASVNGDLKN. Ser-627 carries the post-translational modification Phosphoserine.

Belongs to the sodium:neurotransmitter symporter (SNF) (TC 2.A.22) family. SLC6A19 subfamily. In terms of assembly, interacts in a tissue-specific manner with ACE2 in small intestine and with CLTRN in the kidney. Interacts with CLTRN; this interaction is required for trafficking of SLC6A19 to the plasma membrane and for its catalytic activation in kidneys. Interacts with ACE2; this interaction is required for trafficking of SLC6A19 to the plasma membrane and for its catalytic activation in intestine. Interacts with ANPEP; the interaction positively regulates its amino acid transporter activity.

It localises to the membrane. The enzyme catalyses L-alanine(in) + Na(+)(in) = L-alanine(out) + Na(+)(out). The catalysed reaction is L-cysteine(in) + Na(+)(in) = L-cysteine(out) + Na(+)(out). It catalyses the reaction L-glutamine(in) + Na(+)(in) = L-glutamine(out) + Na(+)(out). It carries out the reaction glycine(in) + Na(+)(in) = glycine(out) + Na(+)(out). The enzyme catalyses L-isoleucine(in) + Na(+)(in) = L-isoleucine(out) + Na(+)(out). The catalysed reaction is L-leucine(in) + Na(+)(in) = L-leucine(out) + Na(+)(out). It catalyses the reaction L-methionine(in) + Na(+)(in) = L-methionine(out) + Na(+)(out). It carries out the reaction L-phenylalanine(in) + Na(+)(in) = L-phenylalanine(out) + Na(+)(out). The enzyme catalyses L-serine(in) + Na(+)(in) = L-serine(out) + Na(+)(out). The catalysed reaction is L-tryptophan(in) + Na(+)(in) = L-tryptophan(out) + Na(+)(out). It catalyses the reaction L-tyrosine(in) + Na(+)(in) = L-tyrosine(out) + Na(+)(out). It carries out the reaction L-valine(in) + Na(+)(in) = L-valine(out) + Na(+)(out). Functionally, transporter that mediates resorption of neutral amino acids across the apical membrane of renal and intestinal epithelial cells. This uptake is sodium-dependent and chloride-independent. Requires CLTRN in kidney or ACE2 in intestine for cell surface expression and amino acid transporter activity. The protein is Sodium-dependent neutral amino acid transporter B(0)AT1 of Rattus norvegicus (Rat).